The sequence spans 593 residues: Mitoguardin 2 (593 aa).

Transmembrane regions (helical) follow at residues 11–31 (MIQALAMTVAEIPVFLYTTFG) and 42–62 (PGLRKVLFATALGTVALALAA). Disordered stretches follow at residues 101-134 (KKGYSNRRVQSPSSKSNDTLSGISSIEPSKHSGS) and 195-228 (LSVGQRGDSGSTPTPGDGLRNPETASEALSEPES). The segment covering 107 to 123 (RRVQSPSSKSNDTLSGI) has biased composition (polar residues). Low complexity predominate over residues 124–134 (SSIEPSKHSGS). Serine 132 is subject to Phosphoserine. Threonine 206 carries the post-translational modification Phosphothreonine. Phosphoserine occurs at positions 220, 224, and 228. Threonine 273 carries the phosphothreonine modification. A phosphoserine mark is found at serine 276 and serine 295. The FFAT signature appears at 292-298 (SFFSATE). The chain crosses the membrane as a helical span at residues 563-583 (ILLGYLGVPAASSIGLNGVLP).

The protein belongs to the mitoguardin family. Homodimer and heterodimer; forms heterodimers with MIGA1. Interacts with PLD6/MitoPLD. Interacts (via phosphorylated FFAT motif) with MOSPD2. In terms of processing, phosphorylation at Ser-295 of the FFAT motif activates interaction with MOSPD2.

It is found in the mitochondrion outer membrane. Its function is as follows. Regulator of mitochondrial fusion: acts by forming homo- and heterodimers at the mitochondrial outer membrane and facilitating the formation of PLD6/MitoPLD dimers. May act by regulating phospholipid metabolism via PLD6/MitoPLD. In Bos taurus (Bovine), this protein is Mitoguardin 2.